The following is a 293-amino-acid chain: Ribosomal protein L11 methyltransferase (293 aa).

S-adenosyl-L-methionine-binding residues include Thr-146, Gly-167, Asp-189, and Asn-230.

This sequence belongs to the methyltransferase superfamily. PrmA family.

It localises to the cytoplasm. It catalyses the reaction L-lysyl-[protein] + 3 S-adenosyl-L-methionine = N(6),N(6),N(6)-trimethyl-L-lysyl-[protein] + 3 S-adenosyl-L-homocysteine + 3 H(+). In terms of biological role, methylates ribosomal protein L11. The chain is Ribosomal protein L11 methyltransferase from Colwellia psychrerythraea (strain 34H / ATCC BAA-681) (Vibrio psychroerythus).